The following is a 462-amino-acid chain: uncharacterized protein (462 aa).

7 WD repeats span residues 170 to 209 (GGER…EVQL), 212 to 260 (GHTD…PLLR), 263 to 302 (GHLA…ELLM), 305 to 344 (GHSE…SIMV), 347 to 386 (EHIR…LAHT), 389 to 430 (AHSS…LIKS), and 433 to 462 (GHEE…LWYP).

The protein localises to the cytoplasm. This is an uncharacterized protein from Schizosaccharomyces pombe (strain 972 / ATCC 24843) (Fission yeast).